The chain runs to 613 residues: Ribosome-associated molecular chaperone SSB2 (613 aa).

An N-acetylalanine modification is found at A2. Residues 2–391 are nucleotide binding domain (NBD); it reads AEGVFQGAIG…ILTGQSTSDE (390 aa). Residue 16–18 coordinates ATP; sequence TTY. T47 bears the Phosphothreonine mark. Residues K73, 205 to 207, 271 to 278, and G342 contribute to the ATP site; these read GGT and ERAKRTLS. Residues 392-402 are inter-domain linker; the sequence is TKDLLLLDVAP. The interval 403 to 613 is substrate binding domain (SBD); that stretch reads LSLGVGMQGD…RVVTKAMSSR (211 aa). Residues 428-430 carry the Contributes to ribosome binding motif; it reads KRR. At T431 the chain carries Phosphothreonine. The tract at residues 516–612 is lid domain (SBDalpha); sequence SEEIEKMVNQ…KRVVTKAMSS (97 aa). A Nuclear export signal motif is present at residues 574–582; that stretch reads IEAALSDAL. The required for interaction with ribosomes stretch occupies residues 601–613; the sequence is GLKRVVTKAMSSR.

It belongs to the heat shock protein 70 family. Ssb-type Hsp70 subfamily. As to quaternary structure, binds to ribosomes. Binds close to the ribosomal tunnel exit via contacts with both ribosomal proteins RPL35, RPL39 and RPL19, and rRNA. Directly interacts with nascent polypeptides. This interaction is dependent on the ribosome-associated complex (RAC). Interacts with SSE1.

It localises to the cytoplasm. It catalyses the reaction ATP + H2O = ADP + phosphate + H(+). Its function is as follows. Ribosome-bound, Hsp70-type chaperone that assists in the cotranslational folding of newly synthesized proteins in the cytosol. Stimulates folding by interacting with nascent chains, binding to short, largely hydrophobic sequences exposed by unfolded proteins, thereby stabilizing longer, more slowly translated, and aggregation-prone nascent polypeptides and domains that cannot fold stably until fully synthesized. The Hsp70-protein substrate interaction depends on ATP-binding and on allosteric regulation between the NBD and the SBD. The ATP-bound state is characterized by a fast exchange rate of substrate (low affinity state), while in the ADP-bound state exchange is much slower (high affinity state). During the Hsp70 cycle, the chaperone switches between the ATP-bound state (open conformation) and the ADP-bound state (closed conformation) by major conformational rearrangements involving mainly the lid domain. Ssb cooperates with a specific Hsp40/Hsp70 co-chaperone termed the ribosome-associated complex (RAC), which stimulates the ATPase activity of the ribosome-associated pool of Ssbs and switches it to the high affinity substrate binding state. Hsp110 chaperone SSE1 and FES1 act as nucleotide exchange factors that cause substrate release. The polypeptide is Ribosome-associated molecular chaperone SSB2 (Saccharomyces cerevisiae (strain ATCC 204508 / S288c) (Baker's yeast)).